Reading from the N-terminus, the 97-residue chain is Putative pterin-4-alpha-carbinolamine dehydratase (97 aa).

The protein belongs to the pterin-4-alpha-carbinolamine dehydratase family.

It carries out the reaction (4aS,6R)-4a-hydroxy-L-erythro-5,6,7,8-tetrahydrobiopterin = (6R)-L-erythro-6,7-dihydrobiopterin + H2O. This is Putative pterin-4-alpha-carbinolamine dehydratase from Opitutus terrae (strain DSM 11246 / JCM 15787 / PB90-1).